A 333-amino-acid chain; its full sequence is MANIYYDADCDLSSLKGKTIAVIGYGSQGHAQAQNMKDSGLKVIIGLKEGSKSIQDAKNAGFEVYSVAEASQKADVIQILAPDTIQADLYKKDIEPNLKKGNALVFSHGFNIHYDFIKPPEEVDVYMVAPKGPGHLVRRVYTEGGGVPCLIAVHQDSTGEAKKRALAHAAGVGGGRAGILETSFREETETDLFGEQVVLCGGLSNLIMAGFETLTEAGYDPEIAYFECLHEVKLITDLIYEGGLARMRFSISDTAEYGDYVSGPRVIDPGVKQRMKEVLNDIQKDKGAKFATNWMAETKAGYPNFKNMRDKNAAHPIESVGKKLRSMMKWLSK.

In terms of domain architecture, KARI N-terminal Rossmann spans 2 to 182; sequence ANIYYDADCD…GGGRAGILET (181 aa). NADP(+) is bound by residues 25–28, K48, S51, S53, and 83–86; these read YGSQ and DTIQ. The active site involves H108. G134 provides a ligand contact to NADP(+). The 149-residue stretch at 183–331 folds into the KARI C-terminal knotted domain; it reads SFREETETDL…KKLRSMMKWL (149 aa). Residues D191, E195, E227, and E231 each coordinate Mg(2+). Substrate is bound at residue S252.

The protein belongs to the ketol-acid reductoisomerase family. Requires Mg(2+) as cofactor.

It catalyses the reaction (2R)-2,3-dihydroxy-3-methylbutanoate + NADP(+) = (2S)-2-acetolactate + NADPH + H(+). It carries out the reaction (2R,3R)-2,3-dihydroxy-3-methylpentanoate + NADP(+) = (S)-2-ethyl-2-hydroxy-3-oxobutanoate + NADPH + H(+). It functions in the pathway amino-acid biosynthesis; L-isoleucine biosynthesis; L-isoleucine from 2-oxobutanoate: step 2/4. Its pathway is amino-acid biosynthesis; L-valine biosynthesis; L-valine from pyruvate: step 2/4. Involved in the biosynthesis of branched-chain amino acids (BCAA). Catalyzes an alkyl-migration followed by a ketol-acid reduction of (S)-2-acetolactate (S2AL) to yield (R)-2,3-dihydroxy-isovalerate. In the isomerase reaction, S2AL is rearranged via a Mg-dependent methyl migration to produce 3-hydroxy-3-methyl-2-ketobutyrate (HMKB). In the reductase reaction, this 2-ketoacid undergoes a metal-dependent reduction by NADPH to yield (R)-2,3-dihydroxy-isovalerate. The chain is Ketol-acid reductoisomerase (NADP(+)) from Leptospira borgpetersenii serovar Hardjo-bovis (strain JB197).